The following is a 291-amino-acid chain: MADLDDIKDGKDFGIGIPQQNPAFTLKGSGSLDWGMQSRLARIFNPKTNRTVMLAFDHGYFQGPTTGLERIDINIAPLFEYADVLMCTRGILRSVVPAAANRPVVLRASGANSILTYLSNEAVAVAMEDAVRLNACAVAAQVYIGTEHEHQSIKNIIQLIDQGMRYGMPTMAVTGVGKDMVRDQRYFSLASRIAAEMGAQVIKTYYVDSGFERIAAGCPVPIVIAGGKKLPERDALEMCYQAIDQGASGVDMGRNIFQSDAPIAMLKAVHAIVHKNENAAAAYQLFLHEQN.

The active-site Schiff-base intermediate with substrate is lysine 203.

The protein belongs to the DeoC/FbaB aldolase family. Homodecamer.

It is found in the cytoplasm. The enzyme catalyses dihydroxyacetone phosphate + acetyl-CoA = 3-hydroxy-2,4-dioxopentyl phosphate + CoA. Involved in the degradation of phospho-AI-2, thereby terminating induction of the lsr operon and closing the AI-2 signaling cycle. Catalyzes the transfer of an acetyl moiety from 3-hydroxy-5-phosphonooxypentane-2,4-dione to CoA to form glycerone phosphate and acetyl-CoA. The polypeptide is 3-hydroxy-5-phosphonooxypentane-2,4-dione thiolase (Yersinia pestis bv. Antiqua (strain Antiqua)).